The sequence spans 320 residues: GPI-specific phospholipase A2-like PGAP3 (320 aa).

Positions 1 to 23 (MAKRTAPLLLLTLAVGLAGGSQG) are cleaved as a signal peptide. The Lumenal segment spans residues 24 to 98 (DREPVYRDCV…QFHGKWPFSR (75 aa)). Residue Asn40 is glycosylated (N-linked (GlcNAc...) asparagine). Residues 99–119 (FLFIQEPASAVASLLNGLASL) form a helical membrane-spanning segment. Topologically, residues 120 to 135 (VMLCRYRASVPASSPM) are cytoplasmic. Residues 136-156 (YHTCMAFAWVSLNAWFWSTVF) form a helical membrane-spanning segment. Residues 157-169 (HTRDTDLTEKMDY) lie on the Lumenal side of the membrane. A helical transmembrane segment spans residues 170 to 190 (FCASAVILHSVYLCCVRTVGL). The Cytoplasmic portion of the chain corresponds to 191 to 198 (QHPSVASA). The helical transmembrane segment at 199–219 (FGALLLLLLTGHISYLSLVHF) threads the bilayer. Residues 220 to 223 (DYGY) lie on the Lumenal side of the membrane. The helical transmembrane segment at 224–244 (NMMANVAIGLVNLAWWLVWCL) threads the bilayer. Over 245–257 (RNRQRLPHTRRCM) the chain is Cytoplasmic. Residues 258–278 (VVVVLLQGLSLLELLDFPPLF) traverse the membrane as a helical segment. Trp279 is a topological domain (lumenal). The chain crosses the membrane as a helical span at residues 280-299 (VLDAHAIWHISTIPVHTLFF). The Cytoplasmic segment spans residues 300–320 (RFLEDDSLYLLKESGAMFKLD).

It belongs to the PGAP3 family.

It is found in the golgi apparatus membrane. In terms of biological role, involved in the fatty acid remodeling steps of GPI-anchor maturation where the unsaturated acyl chain at sn-2 of inositol phosphate is replaced by a saturated stearoyl chain. May catalyze the first step of the fatty acid remodeling, by removing the unsaturated acyl chain at sn-2 of inositol phosphate, generating a lyso-GPI intermediate. The fatty acid remodeling steps is critical for the integration of GPI-APs into lipid rafts. This is GPI-specific phospholipase A2-like PGAP3 from Mus musculus (Mouse).